The sequence spans 289 residues: Signal peptidase I (289 aa).

At 1–43 (MKKLTSTTTTLWDNKLFINNLKNFMQTNTESNNNKTTAQEWKS) the chain is on the cytoplasmic side. A helical membrane pass occupies residues 44–64 (FILVVVIALMIRILIIESFVV). Topologically, residues 65-289 (PTGSMKATIL…IFRNLYSIED (225 aa)) are periplasmic. Active-site residues include S68 and K131.

The protein belongs to the peptidase S26 family.

The protein resides in the cell inner membrane. It catalyses the reaction Cleavage of hydrophobic, N-terminal signal or leader sequences from secreted and periplasmic proteins.. This is Signal peptidase I (lepB) from Rickettsia bellii (strain OSU 85-389).